A 117-amino-acid chain; its full sequence is Glycine cleavage system H-like protein (117 aa).

The Lipoyl-binding domain occupies 21-103 (IVRLGLSSRM…ESEGWFVVLQ (83 aa)). Position 62 is an N6-lipoyllysine (lysine 62).

The protein belongs to the GcvH family. Requires (R)-lipoate as cofactor.

In Chlamydia muridarum (strain MoPn / Nigg), this protein is Glycine cleavage system H-like protein.